The following is a 303-amino-acid chain: Coenzyme PQQ synthesis protein B (303 aa).

This sequence belongs to the PqqB family.

The protein operates within cofactor biosynthesis; pyrroloquinoline quinone biosynthesis. Its function is as follows. May be involved in the transport of PQQ or its precursor to the periplasm. The polypeptide is Coenzyme PQQ synthesis protein B (Pseudomonas putida (strain ATCC 700007 / DSM 6899 / JCM 31910 / BCRC 17059 / LMG 24140 / F1)).